The chain runs to 366 residues: Phospho-N-acetylmuramoyl-pentapeptide-transferase (366 aa).

The next 10 membrane-spanning stretches (helical) occupy residues 27 to 47, 71 to 91, 93 to 113, 134 to 154, 174 to 194, 205 to 225, 245 to 265, 268 to 288, 294 to 314, and 343 to 363; these read AALFTSALIVFLFGPTIINSL, TPTMGGLMILAGIVGASLLWA, LSNVYVVATLLVTLGFGAIGF, LGIEFVIAGIAVYFMMRTALA, FMINIGIMFVVFGGFVIVGAG, GLAIVPVMIAAASFGVIAYLA, LAVVLGAVIGAGLGFLWFNAP, AIFMGDTGSLALGGTIGTVAV, IVMAIIGGLFVMETLSVIIQV, and QVVIRFWIIAVGLAMLGLSTL.

The protein belongs to the glycosyltransferase 4 family. MraY subfamily. The cofactor is Mg(2+).

It localises to the cell inner membrane. The catalysed reaction is UDP-N-acetyl-alpha-D-muramoyl-L-alanyl-gamma-D-glutamyl-meso-2,6-diaminopimeloyl-D-alanyl-D-alanine + di-trans,octa-cis-undecaprenyl phosphate = di-trans,octa-cis-undecaprenyl diphospho-N-acetyl-alpha-D-muramoyl-L-alanyl-D-glutamyl-meso-2,6-diaminopimeloyl-D-alanyl-D-alanine + UMP. It participates in cell wall biogenesis; peptidoglycan biosynthesis. Catalyzes the initial step of the lipid cycle reactions in the biosynthesis of the cell wall peptidoglycan: transfers peptidoglycan precursor phospho-MurNAc-pentapeptide from UDP-MurNAc-pentapeptide onto the lipid carrier undecaprenyl phosphate, yielding undecaprenyl-pyrophosphoryl-MurNAc-pentapeptide, known as lipid I. The polypeptide is Phospho-N-acetylmuramoyl-pentapeptide-transferase (Rhizobium leguminosarum bv. trifolii (strain WSM2304)).